Here is a 363-residue protein sequence, read N- to C-terminus: Type-1 angiotensin II receptor B (363 aa).

Residues Met1 to Asn27 are Extracellular-facing. An N-linked (GlcNAc...) asparagine glycan is attached at Asn4. Cystine bridges form between Cys20-Cys274 and Cys103-Cys182. The helical transmembrane segment at Tyr28–Ser57 threads the bilayer. Residues Tyr58–Thr63 lie on the Cytoplasmic side of the membrane. The chain crosses the membrane as a helical span at residues Met64–Ala91. Residues Met92–Asp100 lie on the Extracellular side of the membrane. A helical membrane pass occupies residues Leu101–Asp127. Over Arg128 to Thr143 the chain is Cytoplasmic. Residues Val144 to Ile167 traverse the membrane as a helical segment. Topologically, residues Tyr168–Tyr192 are extracellular. Residue Arg169 coordinates angiotensin II. Residue Asn178 is glycosylated (N-linked (GlcNAc...) asparagine). The angiotensin II site is built by Tyr186 and Lys201. A helical membrane pass occupies residues Phe193–Thr218. The Cytoplasmic segment spans residues Leu219–Phe239. A helical transmembrane segment spans residues Lys240–Met268. Topologically, residues Asp269–Asp278 are extracellular. Residues Ile279 to Phe304 traverse the membrane as a helical segment. Topologically, residues Phe305–Lys363 are cytoplasmic. Residues Cys346 and Cys362 are each lipidated (S-palmitoyl cysteine).

It belongs to the G-protein coupled receptor 1 family. In terms of processing, C-terminal Ser or Thr residues may be phosphorylated. Heart membranes, follicular oocytes.

The protein localises to the cell membrane. Functionally, receptor for angiotensin II, a vasoconstricting peptide, which acts as a key regulator of blood pressure and sodium retention by the kidney. The activated receptor in turn couples to G-alpha proteins G(q) (GNAQ, GNA11, GNA14 or GNA15) and thus activates phospholipase C and increases the cytosolic Ca(2+) concentrations, which in turn triggers cellular responses such as stimulation of protein kinase C. This is Type-1 angiotensin II receptor B (agtr1-b) from Xenopus laevis (African clawed frog).